The primary structure comprises 201 residues: Large ribosomal subunit protein uL4 (201 aa).

The segment at 45–66 is disordered; it reads AQLTRSEVSGGGKKPWRQKGTG.

It belongs to the universal ribosomal protein uL4 family. In terms of assembly, part of the 50S ribosomal subunit.

Functionally, one of the primary rRNA binding proteins, this protein initially binds near the 5'-end of the 23S rRNA. It is important during the early stages of 50S assembly. It makes multiple contacts with different domains of the 23S rRNA in the assembled 50S subunit and ribosome. In terms of biological role, forms part of the polypeptide exit tunnel. This chain is Large ribosomal subunit protein uL4, found in Aeromonas salmonicida (strain A449).